Reading from the N-terminus, the 130-residue chain is Flagellar assembly factor FliW (130 aa).

Belongs to the FliW family. Interacts with translational regulator CsrA and flagellin(s).

It is found in the cytoplasm. In terms of biological role, acts as an anti-CsrA protein, binds CsrA and prevents it from repressing translation of its target genes, one of which is flagellin. Binds to flagellin and participates in the assembly of the flagellum. The polypeptide is Flagellar assembly factor FliW (Clostridioides difficile (strain 630) (Peptoclostridium difficile)).